Here is a 242-residue protein sequence, read N- to C-terminus: uncharacterized protein (242 aa).

2 disordered regions span residues 16–121 and 152–178; these read GLYK…GAMA and PVRPAKLPKGKGRLRRPRQSRFKTQPV. Composition is skewed to pro residues over residues 50-64 and 97-113; these read PRPPTGPPARYPSPA and EPRPPPESPGAQPPPGP. Positions 157–172 are enriched in basic residues; the sequence is KLPKGKGRLRRPRQSR. Threonine 175 carries the post-translational modification Phosphothreonine. Residues serine 192, serine 206, serine 216, serine 232, and serine 238 each carry the phosphoserine modification. The tract at residues 215-242 is disordered; that stretch reads QSLSLQREPLGSCKLRNSLDSSDSDSAL. Residues 232 to 242 show a composition bias toward low complexity; the sequence is SLDSSDSDSAL.

The protein resides in the cytoplasm. This is an uncharacterized protein from Rattus norvegicus (Rat).